The primary structure comprises 405 residues: uncharacterized protein (405 aa).

The first 20 residues, 1 to 20 (MKAKLALSIIGLVLASLVAG), serve as a signal peptide directing secretion. At cysteine 21 the chain carries N-acetylcysteine. A lipid anchor (S-archaeol cysteine) is attached at cysteine 21.

It belongs to the BMP lipoprotein family.

The protein localises to the cell membrane. This is an uncharacterized protein from Pyrococcus horikoshii (strain ATCC 700860 / DSM 12428 / JCM 9974 / NBRC 100139 / OT-3).